The primary structure comprises 102 residues: Urease subunit beta (102 aa).

Belongs to the urease beta subunit family. Heterotrimer of UreA (gamma), UreB (beta) and UreC (alpha) subunits. Three heterotrimers associate to form the active enzyme.

Its subcellular location is the cytoplasm. It catalyses the reaction urea + 2 H2O + H(+) = hydrogencarbonate + 2 NH4(+). It functions in the pathway nitrogen metabolism; urea degradation; CO(2) and NH(3) from urea (urease route): step 1/1. The chain is Urease subunit beta from Trichodesmium erythraeum (strain IMS101).